The following is a 749-amino-acid chain: Small G protein signaling modulator 3 (749 aa).

Residues 113–304 (GIPHGMRPQL…RIWDLFFYEG (192 aa)) enclose the Rab-GAP TBC domain. Phosphoserine is present on serine 405. Residues 414–438 (EDDLEALKAKNIKQTELVADLREAI) adopt a coiled-coil conformation. The 60-residue stretch at 479–538 (SHRRRAKALLDFERHDDDELGFRKNDIITIISQKDEHCWVGELNGLRGWFPAKFVEVLDE) folds into the SH3 domain. Residues 554–717 (GVTDLVRGTL…FAFSLSQDWE (164 aa)) form the RUN domain.

The protein belongs to the small G protein signaling modulator family. Interacts with GJA1. Interaction with GJA1 induces its degradation. Interacts (via RUN domain) with NF2 (via C-terminus). Interacts with RAB3A, RAB4A, RAB5A, RAB8A, RAB11A, RAP1A, RAP1B, RAP2A, RAP2B and PDCD6I. No interaction with RAB27A. No interaction with GJB1 or GJD2. As to expression, expressed in brain, liver, kidney and testis. Moderately expressed in heart, very weakly in lung and muscle. Not expressed in spleen.

It localises to the cytoplasm. In terms of biological role, may play a cooperative role in NF2-mediated growth suppression of cells. May act as a modulator of small G protein RAB- and RAP-mediated neuronal signal transduction and vesicular transportation pathways. This chain is Small G protein signaling modulator 3, found in Rattus norvegicus (Rat).